A 426-amino-acid polypeptide reads, in one-letter code: Anhydromevalonate phosphate decarboxylase (426 aa).

2 residues coordinate Mn(2+): asparagine 148 and glutamate 211. Catalysis depends on aspartate 255, which acts as the Proton acceptor.

The protein belongs to the UbiD family. It depends on prenylated FMN as a cofactor. Mn(2+) is required as a cofactor.

The catalysed reaction is (2E)-3-methyl-5-phosphooxypent-2-enoate + H(+) = isopentenyl phosphate + CO2. Its pathway is isoprenoid biosynthesis; isopentenyl diphosphate biosynthesis via mevalonate pathway. Catalyzes the conversion of trans-anhydromevalonate 5-phosphate (tAHMP) into isopentenyl phosphate. Involved in the archaeal mevalonate (MVA) pathway, which provides fundamental precursors for isoprenoid biosynthesis, such as isopentenyl diphosphate (IPP) and dimethylallyl diphosphate (DMAPP). This chain is Anhydromevalonate phosphate decarboxylase, found in Archaeoglobus fulgidus (strain ATCC 49558 / DSM 4304 / JCM 9628 / NBRC 100126 / VC-16).